A 191-amino-acid polypeptide reads, in one-letter code: Transcriptional activator GvpE1 (191 aa).

The tract at residues 31 to 51 (SDGASDHADQPPDEGATQRYT) is disordered. 140–145 (KRKVYR) serves as a coordination point for DNA. The interval 150 to 181 (EGAFTRIDHMVDQLLLFSLVLKAVMTDCKARQ) is leucine-zipper.

In terms of assembly, interacts with GvpD.

It localises to the cytoplasm. With respect to regulation, the amount of protein that accumulates is controlled by GvpD; GvpD causes a reduction in the amount of GvpE, preventing accumulation of excessive amounts of gas vesicles. Plays a regulatory role in gas vesicle synthesis, activates transcription of the gvpA operon, and probably of the gvpD operon. Gas vesicles are hollow, gas filled proteinaceous nanostructures found in several microbial planktonic microorganisms. They allow positioning of halobacteria at the optimal depth for growth in the poorly aerated, shallow brine pools of their habitat. In terms of biological role, expression of a 9.5 kb p-vac DNA fragment containing 2 divergently transcribed regions (gvpD-gvpE-gvpF-gvpG-gvpH-gvpI-gvpJ-gvpK-gvpL-gvpM and gvpA-gvpC-gvpN-gvpO) allows H.volcanii to produce gas vesicles. A similar region restores gas vesicle production in H.halobium without the p-vac locus, but it still has the c-vac locus. This is Transcriptional activator GvpE1 (gvpE11) from Halobacterium salinarum (strain ATCC 700922 / JCM 11081 / NRC-1) (Halobacterium halobium).